The following is a 129-amino-acid chain: Transcription antitermination protein NusB (129 aa).

Belongs to the NusB family.

In terms of biological role, involved in transcription antitermination. Required for transcription of ribosomal RNA (rRNA) genes. Binds specifically to the boxA antiterminator sequence of the ribosomal RNA (rrn) operons. The protein is Transcription antitermination protein NusB of Staphylococcus aureus (strain MRSA252).